We begin with the raw amino-acid sequence, 316 residues long: Acetyl-coenzyme A carboxylase carboxyl transferase subunit alpha (316 aa).

In terms of domain architecture, CoA carboxyltransferase C-terminal spans 35–292 (EIEILSQKLE…KTYVLQELKD (258 aa)).

It belongs to the AccA family. In terms of assembly, acetyl-CoA carboxylase is a heterohexamer composed of biotin carboxyl carrier protein (AccB), biotin carboxylase (AccC) and two subunits each of ACCase subunit alpha (AccA) and ACCase subunit beta (AccD).

It is found in the cytoplasm. It carries out the reaction N(6)-carboxybiotinyl-L-lysyl-[protein] + acetyl-CoA = N(6)-biotinyl-L-lysyl-[protein] + malonyl-CoA. It functions in the pathway lipid metabolism; malonyl-CoA biosynthesis; malonyl-CoA from acetyl-CoA: step 1/1. Its function is as follows. Component of the acetyl coenzyme A carboxylase (ACC) complex. First, biotin carboxylase catalyzes the carboxylation of biotin on its carrier protein (BCCP) and then the CO(2) group is transferred by the carboxyltransferase to acetyl-CoA to form malonyl-CoA. The chain is Acetyl-coenzyme A carboxylase carboxyl transferase subunit alpha from Alkaliphilus oremlandii (strain OhILAs) (Clostridium oremlandii (strain OhILAs)).